Reading from the N-terminus, the 238-residue chain is uncharacterized protein (238 aa).

4 consecutive transmembrane segments (helical) span residues 13-33, 40-60, 107-127, and 140-160; these read TLFF…FGII, GSVG…LILG, VVLI…FCQV, and VISL…PMAF. 4Fe-4S ferredoxin-type domains are found at residues 178-208 and 204-233; these read PFFQ…TEKL and ITEK…FSYA. [4Fe-4S] cluster is bound by residues C188, C191, C194, C198, C213, C216, C219, and C223.

It localises to the cell membrane. This is an uncharacterized protein from Methanocaldococcus jannaschii (strain ATCC 43067 / DSM 2661 / JAL-1 / JCM 10045 / NBRC 100440) (Methanococcus jannaschii).